Here is a 524-residue protein sequence, read N- to C-terminus: Solute carrier family 35 member F5 (524 aa).

Residues 1–22 (MVPPRHHPGAGRPGALSSSPPF) are disordered. Low complexity predominate over residues 13 to 22 (PGALSSSPPF). The next 2 helical transmembrane spans lie at 69 to 89 (MALG…SSEL) and 101 to 121 (FFST…FIVW). A Phosphoserine modification is found at S207. Helical transmembrane passes span 244 to 264 (ISFF…EALS), 269 to 289 (AIVN…AAMF), 297 to 317 (FTLS…LVNL), 328 to 348 (TIGS…IVMI), 362 to 382 (MFFG…FFLL), 396 to 416 (VVLM…EFLW), 421 to 441 (FLTS…LSII), and 453 to 473 (WLFF…TLLC). Positions 253 to 317 (FLANFSYQEA…SIGGVVLVNL (65 aa)) constitute an EamA domain.

It belongs to the SLC35F solute transporter family.

It is found in the membrane. Functionally, putative solute transporter. The polypeptide is Solute carrier family 35 member F5 (SLC35F5) (Bos taurus (Bovine)).